A 332-amino-acid chain; its full sequence is MQKNILVLGAGAWGTALALQLAYRGHNVRINSWKAEHNEQMLKDNNNHKYLPSIEKFPSRLKAIQDWQANIIEFDSILVATPSSGFKNTILELKECILPQQNIISATKGFCHDSYALLSEIAEDILPTTKFALLTGPSFAKELANQLPTAVVVASKDINYARYVQELFSNENFRCYTTTDIIGAQVGGAVKNVLAITAGIAAGMEFGVNAHAALITRGLAEIKKLGLKLGANSETFIGLSCLGDLLLTCSDNQSRNRRFGLYLGQGMTIQQALKEVNNVVEGYFTAKAVYNFAKKHNVEMPLVFATYRILYEAADPRDIVKELMTRQLKNEN.

NADPH contacts are provided by Trp-13, Lys-34, and Lys-108. Positions 108, 136, and 138 each coordinate sn-glycerol 3-phosphate. Ala-140 contributes to the NADPH binding site. Residues Lys-191, Asp-244, Ser-254, Arg-255, and Asn-256 each contribute to the sn-glycerol 3-phosphate site. Lys-191 acts as the Proton acceptor in catalysis. An NADPH-binding site is contributed by Arg-255. NADPH contacts are provided by Val-279 and Glu-281.

This sequence belongs to the NAD-dependent glycerol-3-phosphate dehydrogenase family.

Its subcellular location is the cytoplasm. It carries out the reaction sn-glycerol 3-phosphate + NAD(+) = dihydroxyacetone phosphate + NADH + H(+). It catalyses the reaction sn-glycerol 3-phosphate + NADP(+) = dihydroxyacetone phosphate + NADPH + H(+). It participates in membrane lipid metabolism; glycerophospholipid metabolism. In terms of biological role, catalyzes the reduction of the glycolytic intermediate dihydroxyacetone phosphate (DHAP) to sn-glycerol 3-phosphate (G3P), the key precursor for phospholipid synthesis. In Francisella tularensis subsp. holarctica (strain FTNF002-00 / FTA), this protein is Glycerol-3-phosphate dehydrogenase [NAD(P)+].